The sequence spans 65 residues: Small ribosomal subunit protein bS21 (65 aa).

Positions 45–65 (GRLKRSRSKRRAQRANEERNS) are disordered. Residues 48–57 (KRSRSKRRAQ) are compositionally biased toward basic residues.

This sequence belongs to the bacterial ribosomal protein bS21 family.

This chain is Small ribosomal subunit protein bS21, found in Chlorobium luteolum (strain DSM 273 / BCRC 81028 / 2530) (Pelodictyon luteolum).